The chain runs to 155 residues: Rusticyanin (155 aa).

One can recognise a Plastocyanin-like domain in the interval 53–155; that stretch reads SFEVHDKKNP…TGMFGKIIVK (103 aa). The Cu cation site is built by His85, Cys138, His143, and Met148.

In terms of assembly, monomer. The cofactor is Cu cation.

It is found in the periplasm. Electron carrier from cytochrome c552 to the A-type oxidase. This chain is Rusticyanin (rus), found in Acidithiobacillus ferrooxidans (Thiobacillus ferrooxidans).